Consider the following 530-residue polypeptide: MDNALIADENLKKPSKPAYYGTAGYRSKTSDLNNILCRASLIAYLRSTTFAGKIIGVMITASHNPVEYNGIKIIDHNGDMLDEVWEEYSDRIVNCDDEKLAREMKKILRSCSNQSELGEGVRGHVVLGRDTRDSGERLCNNIRSVLGKLNCTVDDYGVVTTPELHFLVRKCNTENRVVDKAEYMKNIAHNFNSLSSITKGNLRMMIDTANGVADMKLKELDGMLDGKLNYEVLNDPKGILNLDCGADFVKTKKRAPRLEALSSSGFSQAANRICASFDGDVDRLIFFTGPKDTEIFDGDSQAVFLALYIRSLLDRIESRLSIGVVLSYYSNNAAVDVLPPESFKVVMAQTGVKNFVSAAREFDVGIYFEPNGHGSVCFSQACIDEIEKGSTKSHAILKILANLFDPCIGDALANFVIFKALMGSADDLRKFRENPSRLLTVKIVDKNSIKVDQKNQVIEPKELQDKIDVEALSLGGRSFVRPSGTEDVVRVYAECPSEADADLLCLKVAQHVYDMCNGIGDHPEIDYTSK.

Ser-62 acts as the Phosphoserine intermediate in catalysis. Ser-62, Asp-278, Asp-280, and Asp-282 together coordinate Mg(2+). Substrate contacts are provided by residues 369–371 (EPN), 481–485 (RPSGT), and Arg-490.

Belongs to the phosphohexose mutase family. It depends on Mg(2+) as a cofactor.

It carries out the reaction N-acetyl-alpha-D-glucosamine 1-phosphate = N-acetyl-D-glucosamine 6-phosphate. The protein operates within nucleotide-sugar biosynthesis; UDP-N-acetyl-alpha-D-glucosamine biosynthesis; N-acetyl-alpha-D-glucosamine 1-phosphate from alpha-D-glucosamine 6-phosphate (route I): step 2/2. In terms of biological role, catalyzes the conversion of GlcNAc-6-P into GlcNAc-1-P during the synthesis of uridine diphosphate/UDP-GlcNAc, which is a biosynthetic precursor of chitin and also supplies the amino sugars for N-linked oligosaccharides of glycoproteins. The sequence is that of Probable phosphoacetylglucosamine mutase from Encephalitozoon cuniculi (strain GB-M1) (Microsporidian parasite).